A 369-amino-acid polypeptide reads, in one-letter code: Phospho-N-acetylmuramoyl-pentapeptide-transferase (369 aa).

10 helical membrane passes run 2–22, 55–75, 86–106, 120–140, 163–183, 196–216, 239–259, 266–286, 291–311, and 348–368; these read IALL…TPLF, TVVV…MFLM, ALIL…DDFI, AKLI…LNFP, LAFG…NLIV, LDGL…LMGI, PLDL…FLWW, IFMG…FAIL, LLLG…IIQV, and ILGG…WVVL.

The protein belongs to the glycosyltransferase 4 family. MraY subfamily. The cofactor is Mg(2+).

Its subcellular location is the cell membrane. It catalyses the reaction UDP-N-acetyl-alpha-D-muramoyl-L-alanyl-gamma-D-glutamyl-meso-2,6-diaminopimeloyl-D-alanyl-D-alanine + di-trans,octa-cis-undecaprenyl phosphate = di-trans,octa-cis-undecaprenyl diphospho-N-acetyl-alpha-D-muramoyl-L-alanyl-D-glutamyl-meso-2,6-diaminopimeloyl-D-alanyl-D-alanine + UMP. The protein operates within cell wall biogenesis; peptidoglycan biosynthesis. Functionally, catalyzes the initial step of the lipid cycle reactions in the biosynthesis of the cell wall peptidoglycan: transfers peptidoglycan precursor phospho-MurNAc-pentapeptide from UDP-MurNAc-pentapeptide onto the lipid carrier undecaprenyl phosphate, yielding undecaprenyl-pyrophosphoryl-MurNAc-pentapeptide, known as lipid I. This chain is Phospho-N-acetylmuramoyl-pentapeptide-transferase, found in Pseudarthrobacter chlorophenolicus (strain ATCC 700700 / DSM 12829 / CIP 107037 / JCM 12360 / KCTC 9906 / NCIMB 13794 / A6) (Arthrobacter chlorophenolicus).